The chain runs to 87 residues: Conotoxin Cl12.3 (87 aa).

The N-terminal stretch at 1-19 (MKLTCVLVVLLLFLPYGDL) is a signal peptide. Residues 20-42 (ITNNYIGGAARKVTPWRRNLKTR) constitute a propeptide that is removed on maturation.

Belongs to the conotoxin O1 superfamily. Contains 4 disulfide bonds. Expressed by the venom duct.

The protein resides in the secreted. The protein is Conotoxin Cl12.3 of Californiconus californicus (California cone).